The following is a 537-amino-acid chain: Putative cysteine ligase BshC (537 aa).

Residues 417 to 457 adopt a coiled-coil conformation; that stretch reads ASEQFLNELDQLEAQQKETYERLAAEVQGNEDNKNLVEKNN.

This sequence belongs to the BshC family.

Functionally, involved in bacillithiol (BSH) biosynthesis. May catalyze the last step of the pathway, the addition of cysteine to glucosamine malate (GlcN-Mal) to generate BSH. The sequence is that of Putative cysteine ligase BshC from Staphylococcus carnosus (strain TM300).